We begin with the raw amino-acid sequence, 644 residues long: Exoribonuclease 2 (644 aa).

The RNB domain maps to 189–516 (RQDLTALNFV…NHRLLKAVIK (328 aa)). The 83-residue stretch at 561–643 (NTRFAAEIID…ETRSIIARPA (83 aa)) folds into the S1 motif domain.

It belongs to the RNR ribonuclease family. RNase II subfamily.

It is found in the cytoplasm. It carries out the reaction Exonucleolytic cleavage in the 3'- to 5'-direction to yield nucleoside 5'-phosphates.. Its function is as follows. Involved in mRNA degradation. Hydrolyzes single-stranded polyribonucleotides processively in the 3' to 5' direction. This is Exoribonuclease 2 from Salmonella choleraesuis (strain SC-B67).